Reading from the N-terminus, the 148-residue chain is MKIVIQRVMKASLTVNGKSRASINQGLVLLVGIGPDDVQEDLTYAVRKITNMRIFSDEEGKMNLSVRDIKGEVLSVSQFTLFANTKKGNRPAFTGAAQADLASYLYDQFNQELAQFVPVQTGIFGSDMQVSLTNDGPVTILLDTKNKE.

The Gly-cisPro motif, important for rejection of L-amino acids signature appears at 136-137; that stretch reads GP.

It belongs to the DTD family. Homodimer.

Its subcellular location is the cytoplasm. The catalysed reaction is glycyl-tRNA(Ala) + H2O = tRNA(Ala) + glycine + H(+). It carries out the reaction a D-aminoacyl-tRNA + H2O = a tRNA + a D-alpha-amino acid + H(+). Its function is as follows. An aminoacyl-tRNA editing enzyme that deacylates mischarged D-aminoacyl-tRNAs. Also deacylates mischarged glycyl-tRNA(Ala), protecting cells against glycine mischarging by AlaRS. Acts via tRNA-based rather than protein-based catalysis; rejects L-amino acids rather than detecting D-amino acids in the active site. By recycling D-aminoacyl-tRNA to D-amino acids and free tRNA molecules, this enzyme counteracts the toxicity associated with the formation of D-aminoacyl-tRNA entities in vivo and helps enforce protein L-homochirality. The chain is D-aminoacyl-tRNA deacylase from Streptococcus mutans serotype c (strain ATCC 700610 / UA159).